Here is a 96-residue protein sequence, read N- to C-terminus: Small ribosomal subunit protein bS16 (96 aa).

Belongs to the bacterial ribosomal protein bS16 family.

The protein is Small ribosomal subunit protein bS16 of Vesicomyosocius okutanii subsp. Calyptogena okutanii (strain HA).